The sequence spans 520 residues: CBL-interacting serine/threonine-protein kinase 18 (520 aa).

2 disordered regions span residues 1-29 (MAQA…PHPK) and 48-67 (TDKD…SPRN). The segment covering 17–29 (PDPPPPPPPPHPK) has biased composition (pro residues). A compositionally biased stretch (low complexity) spans 55–66 (SPQSPRSPRSPR). A Protein kinase domain is found at 74–328 (YELGKLLGHG…IPEIMKNRWF (255 aa)). ATP is bound by residues 80–88 (LGHGTFAKV) and Lys103. Catalysis depends on Asp196, which acts as the Proton acceptor. The activation loop stretch occupies residues 214-243 (DFGLSAVAEQLRQDGLCHTFCGTPAYIAPE). The residue at position 218 (Ser218) is a Phosphoserine. Position 232 is a phosphothreonine (Thr232). The segment at 349-368 (EDEEEEASSSGRSSTVSESD) is disordered. The span at 356–366 (SSSGRSSTVSE) shows a compositional bias: low complexity. An NAF domain is found at 382-406 (PRPSSLNAFDIISFSSGFDLSGLFE). A PPI region spans residues 410-439 (GEGTRFVSGAPVSKIISKLEEIAKIVSFTV).

This sequence belongs to the protein kinase superfamily. CAMK Ser/Thr protein kinase family. SNF1 subfamily. In terms of assembly, interacts with CBL1 and CBL9. The cofactor is Mn(2+).

The catalysed reaction is L-seryl-[protein] + ATP = O-phospho-L-seryl-[protein] + ADP + H(+). The enzyme catalyses L-threonyl-[protein] + ATP = O-phospho-L-threonyl-[protein] + ADP + H(+). Its function is as follows. CIPK serine-threonine protein kinases interact with CBL proteins. Binding of a CBL protein to the regulatory NAF domain of CIPK protein lead to the activation of the kinase in a calcium-dependent manner. The polypeptide is CBL-interacting serine/threonine-protein kinase 18 (CIPK18) (Arabidopsis thaliana (Mouse-ear cress)).